The following is a 256-amino-acid chain: NH(3)-dependent NAD(+) synthetase (256 aa).

Gly29–Ser36 serves as a coordination point for ATP. Residue Asp35 coordinates Mg(2+). Arg115 contributes to the deamido-NAD(+) binding site. Position 135 (Thr135) interacts with ATP. Residue Glu140 coordinates Mg(2+). Deamido-NAD(+) is bound by residues Lys148 and Asp155. 2 residues coordinate ATP: Lys164 and Ser186. His245–Lys246 is a deamido-NAD(+) binding site.

The protein belongs to the NAD synthetase family. As to quaternary structure, homodimer.

The enzyme catalyses deamido-NAD(+) + NH4(+) + ATP = AMP + diphosphate + NAD(+) + H(+). It participates in cofactor biosynthesis; NAD(+) biosynthesis; NAD(+) from deamido-NAD(+) (ammonia route): step 1/1. Catalyzes the ATP-dependent amidation of deamido-NAD to form NAD. Uses ammonia as a nitrogen source. The polypeptide is NH(3)-dependent NAD(+) synthetase (Methanosarcina mazei (strain ATCC BAA-159 / DSM 3647 / Goe1 / Go1 / JCM 11833 / OCM 88) (Methanosarcina frisia)).